The sequence spans 388 residues: Succinate--CoA ligase [ADP-forming] subunit beta (388 aa).

In terms of domain architecture, ATP-grasp spans 9 to 244 (KALFAEYGLP…PSQDDAREAH (236 aa)). ATP-binding positions include Lys46, 53-55 (GRG), Glu99, Thr102, and Glu107. Residues Asn199 and Asp213 each contribute to the Mg(2+) site. Substrate-binding positions include Asn264 and 321 to 323 (GIV).

The protein belongs to the succinate/malate CoA ligase beta subunit family. Heterotetramer of two alpha and two beta subunits. Mg(2+) is required as a cofactor.

It carries out the reaction succinate + ATP + CoA = succinyl-CoA + ADP + phosphate. The enzyme catalyses GTP + succinate + CoA = succinyl-CoA + GDP + phosphate. It participates in carbohydrate metabolism; tricarboxylic acid cycle; succinate from succinyl-CoA (ligase route): step 1/1. Functionally, succinyl-CoA synthetase functions in the citric acid cycle (TCA), coupling the hydrolysis of succinyl-CoA to the synthesis of either ATP or GTP and thus represents the only step of substrate-level phosphorylation in the TCA. The beta subunit provides nucleotide specificity of the enzyme and binds the substrate succinate, while the binding sites for coenzyme A and phosphate are found in the alpha subunit. The protein is Succinate--CoA ligase [ADP-forming] subunit beta of Shewanella pealeana (strain ATCC 700345 / ANG-SQ1).